Reading from the N-terminus, the 93-residue chain is Putative pterin-4-alpha-carbinolamine dehydratase (93 aa).

The protein belongs to the pterin-4-alpha-carbinolamine dehydratase family.

The enzyme catalyses (4aS,6R)-4a-hydroxy-L-erythro-5,6,7,8-tetrahydrobiopterin = (6R)-L-erythro-6,7-dihydrobiopterin + H2O. This Roseiflexus castenholzii (strain DSM 13941 / HLO8) protein is Putative pterin-4-alpha-carbinolamine dehydratase.